A 208-amino-acid polypeptide reads, in one-letter code: Small ribosomal subunit protein uS4 (208 aa).

In terms of domain architecture, S4 RNA-binding spans 98-168 (RRLDNVVFRL…DSLDTVVRRG (71 aa)).

It belongs to the universal ribosomal protein uS4 family. In terms of assembly, part of the 30S ribosomal subunit. Contacts protein S5. The interaction surface between S4 and S5 is involved in control of translational fidelity.

In terms of biological role, one of the primary rRNA binding proteins, it binds directly to 16S rRNA where it nucleates assembly of the body of the 30S subunit. With S5 and S12 plays an important role in translational accuracy. The chain is Small ribosomal subunit protein uS4 from Desulforapulum autotrophicum (strain ATCC 43914 / DSM 3382 / VKM B-1955 / HRM2) (Desulfobacterium autotrophicum).